Reading from the N-terminus, the 91-residue chain is Small ribosomal subunit protein bS20 (91 aa).

The span at 1-18 (MPLHKSAEKRLRQSDRKN) shows a compositional bias: basic and acidic residues. The segment at 1-25 (MPLHKSAEKRLRQSDRKNARNRARK) is disordered.

It belongs to the bacterial ribosomal protein bS20 family.

Its function is as follows. Binds directly to 16S ribosomal RNA. The protein is Small ribosomal subunit protein bS20 of Chlorobium phaeovibrioides (strain DSM 265 / 1930) (Prosthecochloris vibrioformis (strain DSM 265)).